The sequence spans 55 residues: Large ribosomal subunit protein bL33 (55 aa).

The protein belongs to the bacterial ribosomal protein bL33 family.

The protein is Large ribosomal subunit protein bL33 of Sphingopyxis alaskensis (strain DSM 13593 / LMG 18877 / RB2256) (Sphingomonas alaskensis).